Consider the following 699-residue polypeptide: Endogenous retrovirus group K member 8 Env polyprotein (699 aa).

Residues 1 to 47 (MNPSEMQRKAPPRRRRHRNRAPLTHKMNKMVTSEEQMKLPSTKKAEP) are disordered. The first 89 residues, 1–89 (MNPSEMQRKA…ALMIVSMVVS (89 aa)), serve as a signal peptide directing secretion. Residues 10–20 (APPRRRRHRNR) are compositionally biased toward basic residues. The Extracellular portion of the chain corresponds to 90–632 (LPMPAGAAVA…NLNPVTWVKT (543 aa)). N-linked (GlcNAc...) asparagine glycans are attached at residues Asn-100, Asn-128, Asn-153, Asn-274, Asn-355, Asn-372, and Asn-461. Residues 466 to 486 (FIFTLIAVIMGLIAVTATAAV) are fusion peptide. Residues Asn-507, Asn-554, Asn-566, and Asn-585 are each glycosylated (N-linked (GlcNAc...) asparagine). Residues 633 to 653 (IGSTTIINLILILVCLFCLLL) traverse the membrane as a helical segment. Topologically, residues 654–699 (VCRCTQQLRRDSDHRERAMMTMAVLSKRKGGNVGKSKRDQIVTVSV) are cytoplasmic.

This sequence belongs to the beta type-B retroviral envelope protein family. HERV class-II K(HML-2) env subfamily. The surface (SU) and transmembrane (TM) proteins form a heterodimer. SU and TM are attached by noncovalent interactions or by a labile interchain disulfide bond. Post-translationally, specific enzymatic cleavages in vivo yield the mature SU and TM proteins.

Its subcellular location is the cell membrane. The protein resides in the virion. Its function is as follows. Retroviral envelope proteins mediate receptor recognition and membrane fusion during early infection. Endogenous envelope proteins may have kept, lost or modified their original function during evolution. This endogenous envelope protein has lost its original fusogenic properties. In terms of biological role, SU mediates receptor recognition. Functionally, TM anchors the envelope heterodimer to the viral membrane through one transmembrane domain. The other hydrophobic domain, called fusion peptide, mediates fusion of the viral membrane with the target cell membrane. The sequence is that of Endogenous retrovirus group K member 8 Env polyprotein (ERVK-8) from Homo sapiens (Human).